We begin with the raw amino-acid sequence, 264 residues long: Thymidylate synthase (264 aa).

Arg21 serves as a coordination point for dUMP. Residue His51 participates in (6R)-5,10-methylene-5,6,7,8-tetrahydrofolate binding. DUMP is bound at residue 126–127 (RR). Cys146 serves as the catalytic Nucleophile. DUMP is bound by residues 166–169 (RSAD), Asn177, and 207–209 (HLY). Asp169 contributes to the (6R)-5,10-methylene-5,6,7,8-tetrahydrofolate binding site. Ala263 is a (6R)-5,10-methylene-5,6,7,8-tetrahydrofolate binding site.

It belongs to the thymidylate synthase family. Bacterial-type ThyA subfamily. As to quaternary structure, homodimer.

The protein localises to the cytoplasm. It catalyses the reaction dUMP + (6R)-5,10-methylene-5,6,7,8-tetrahydrofolate = 7,8-dihydrofolate + dTMP. Its pathway is pyrimidine metabolism; dTTP biosynthesis. Its function is as follows. Catalyzes the reductive methylation of 2'-deoxyuridine-5'-monophosphate (dUMP) to 2'-deoxythymidine-5'-monophosphate (dTMP) while utilizing 5,10-methylenetetrahydrofolate (mTHF) as the methyl donor and reductant in the reaction, yielding dihydrofolate (DHF) as a by-product. This enzymatic reaction provides an intracellular de novo source of dTMP, an essential precursor for DNA biosynthesis. The polypeptide is Thymidylate synthase (Stutzerimonas stutzeri (strain A1501) (Pseudomonas stutzeri)).